Reading from the N-terminus, the 756-residue chain is NUT family member 2F (756 aa).

4 disordered regions span residues 173-200 (GNAR…PDDS), 293-438 (IQKS…TSDP), 511-639 (RAAP…LPGM), and 653-756 (RLSQ…HCSQ). Residues 304 to 321 (SLPPPAPPRLEPRGPPAP) show a composition bias toward pro residues. Residues 417 to 427 (EGQREKGKVEQ) show a composition bias toward basic and acidic residues. Polar residues predominate over residues 543-560 (QRVSVETSPPQTAAQDPQ). The span at 654-665 (LSQSPVPSSGLL) shows a compositional bias: low complexity. The segment covering 746–756 (SRRKKKRHCSQ) has biased composition (basic residues).

The protein belongs to the NUT family.

The polypeptide is NUT family member 2F (NUTM2F) (Homo sapiens (Human)).